The primary structure comprises 565 residues: Salicyl-AMP ligase / salicyl-S-ArCP synthetase (565 aa).

G214, G330, V352, D436, R451, and K542 together coordinate ATP.

It belongs to the ATP-dependent AMP-binding enzyme family.

It catalyses the reaction salicylate + ATP + H(+) = 2-hydroxybenzoyl-5'-AMP + diphosphate. The enzyme catalyses 2-hydroxybenzoyl-5'-AMP + holo-[ACP] = salicyl-[ACP] + AMP + H(+). The protein operates within siderophore biosynthesis; mycobactin biosynthesis. Inhibited by salicyl-AMS, an acyl-AMP analog. Also inhibited by 5'-O-[(N-acyl)sulfamoyl]adenosines. Involved in the initial steps of the mycobactin biosynthetic pathway. Catalyzes the salicylation of the aryl carrier protein (ArCP) domain of MbtB through a two-step reaction. The first step is the ATP-dependent adenylation of salicylate to generate a salicyl-AMP intermediate. The second step is the transfer of this activated salicylate to MbtB to form a salicyl-ArCP domain thioester. The sequence is that of Salicyl-AMP ligase / salicyl-S-ArCP synthetase from Mycobacterium tuberculosis (strain ATCC 25618 / H37Rv).